The chain runs to 875 residues: Leucine--tRNA ligase (875 aa).

Positions 43–53 match the 'HIGH' region motif; that stretch reads PYPSGRIHIGH. The short motif at 631 to 635 is the 'KMSKS' region element; that stretch reads KMSKS. Residue Lys-634 coordinates ATP.

This sequence belongs to the class-I aminoacyl-tRNA synthetase family.

Its subcellular location is the cytoplasm. The enzyme catalyses tRNA(Leu) + L-leucine + ATP = L-leucyl-tRNA(Leu) + AMP + diphosphate. This is Leucine--tRNA ligase from Mesorhizobium japonicum (strain LMG 29417 / CECT 9101 / MAFF 303099) (Mesorhizobium loti (strain MAFF 303099)).